The primary structure comprises 786 residues: Zinc finger transcription factor YRM1 (786 aa).

The disordered stretch occupies residues 1-25 (MSKRGSLQDRASPSEETVKKAQKRR). Positions 31-59 (CAFCRKRKLRCDQQKPMCSTCKTRGRSGC) form a DNA-binding region, zn(2)-C6 fungal-type. Positions 721–747 (PLAGNSPGLPPEEVRNNSENASHNNET) are disordered. The span at 737–747 (NSENASHNNET) shows a compositional bias: polar residues.

It localises to the cytoplasm. The protein resides in the nucleus. Its function is as follows. Transcription factor involved in the regulation of multidrug resistance genes. Acts in concert with YRR1. The sequence is that of Zinc finger transcription factor YRM1 (YRM1) from Saccharomyces cerevisiae (strain ATCC 204508 / S288c) (Baker's yeast).